Reading from the N-terminus, the 103-residue chain is Small ribosomal subunit protein uS10 (103 aa).

The protein belongs to the universal ribosomal protein uS10 family. As to quaternary structure, part of the 30S ribosomal subunit.

Its function is as follows. Involved in the binding of tRNA to the ribosomes. This Polynucleobacter asymbioticus (strain DSM 18221 / CIP 109841 / QLW-P1DMWA-1) (Polynucleobacter necessarius subsp. asymbioticus) protein is Small ribosomal subunit protein uS10.